Reading from the N-terminus, the 335-residue chain is 4-hydroxythreonine-4-phosphate dehydrogenase (335 aa).

Threonine 132 contributes to the substrate binding site. A divalent metal cation is bound by residues histidine 163, histidine 208, and histidine 263. The substrate site is built by lysine 271, asparagine 280, and arginine 289.

Belongs to the PdxA family. As to quaternary structure, homodimer. Zn(2+) is required as a cofactor. The cofactor is Mg(2+). It depends on Co(2+) as a cofactor.

It localises to the cytoplasm. It catalyses the reaction 4-(phosphooxy)-L-threonine + NAD(+) = 3-amino-2-oxopropyl phosphate + CO2 + NADH. It participates in cofactor biosynthesis; pyridoxine 5'-phosphate biosynthesis; pyridoxine 5'-phosphate from D-erythrose 4-phosphate: step 4/5. Its function is as follows. Catalyzes the NAD(P)-dependent oxidation of 4-(phosphooxy)-L-threonine (HTP) into 2-amino-3-oxo-4-(phosphooxy)butyric acid which spontaneously decarboxylates to form 3-amino-2-oxopropyl phosphate (AHAP). This Zymomonas mobilis subsp. mobilis (strain ATCC 31821 / ZM4 / CP4) protein is 4-hydroxythreonine-4-phosphate dehydrogenase.